The chain runs to 236 residues: UPF0257 lipoprotein YnfC (236 aa).

A signal peptide spans 1 to 16; that stretch reads MKKPLLLTLLCMILAG. A lipid anchor (N-palmitoyl cysteine) is attached at Cys-17. Cys-17 is lipidated: S-diacylglycerol cysteine.

Belongs to the UPF0257 family.

The protein resides in the cell membrane. The sequence is that of UPF0257 lipoprotein YnfC from Salmonella heidelberg (strain SL476).